We begin with the raw amino-acid sequence, 1361 residues long: Rho guanine nucleotide exchange factor 18 (1361 aa).

3 disordered regions span residues 33–88 (LQDL…SCSE), 131–156 (SGGG…SRSV), and 244–292 (DGAG…ARER). Basic and acidic residues predominate over residues 50-61 (PDSRPTGEEPGR). Over residues 64-73 (LFSSLAGSQD) the composition is skewed to polar residues. Positions 74 to 88 (LSRRRSWERSRSCSE) are enriched in basic and acidic residues. Composition is skewed to basic and acidic residues over residues 245-256 (GAGKNEKSDKST) and 271-292 (RQKE…ARER). The C2H2-type; degenerate zinc-finger motif lies at 310–334 (SSCPLCGKPFLSSASLKEHPRGTLL). Residues 348 to 368 (TVSQKGGPQPTPSPAGPGTQL) form a disordered region. In terms of domain architecture, DH spans 447-644 (KRQDVLYELM…KDIISQVDAK (198 aa)). Positions 684–786 (QLHLEGMLCW…WMAHIQRAVE (103 aa)) constitute a PH domain. Disordered stretches follow at residues 893 to 980 (ANGQ…DPRL), 1143 to 1211 (LKKQ…RLAK), 1229 to 1264 (AAVQ…SSAS), and 1277 to 1361 (MGKD…VIFF). Position 912 is a phosphothreonine (T912). S921 carries the phosphoserine modification. Residues 1038 to 1148 (LEQERQRNFE…LLRRLKKQNT (111 aa)) adopt a coiled-coil conformation. Positions 1191–1211 (YAERPEVARRDSAPTENRLAK) are enriched in basic and acidic residues. A compositionally biased stretch (polar residues) spans 1254–1264 (RGSQRWESSAS). A phosphoserine mark is found at S1289 and S1291. 2 stretches are compositionally biased toward pro residues: residues 1300 to 1317 (PAPP…PPAD) and 1334 to 1344 (PGPPAPSPLPA). Over residues 1349-1361 (AKEDASKEDVIFF) the composition is skewed to basic and acidic residues.

Interacts with SEPT9; the interaction may inhibit GEF activity. Interacts with Gbetagamma subunits GNB1 and GNG2. Interacts with EPB41L4B. Interacts with PATJ (via C-terminus). In terms of tissue distribution, expressed in all tissues tested with highest expression in kidney and pancreas. Weakly or not expressed in liver, skeletal muscle and testis. Isoform 1: Expressed in eosinophils. Isoform 2: Expressed in eosinophils. Isoform 3: Expressed in eosinophils. Isoform 4: Not detected in eosinophils.

The protein resides in the cytoplasm. It is found in the cytoskeleton. It localises to the cell membrane. Its subcellular location is the apical cell membrane. Its function is as follows. Acts as a guanine nucleotide exchange factor (GEF) for RhoA GTPases. Its activation induces formation of actin stress fibers. Also acts as a GEF for RAC1, inducing production of reactive oxygen species (ROS). Does not act as a GEF for CDC42. The G protein beta-gamma (Gbetagamma) subunits of heterotrimeric G proteins act as activators, explaining the integrated effects of LPA and other G-protein coupled receptor agonists on actin stress fiber formation, cell shape change and ROS production. Required for EPB41L4B-mediated regulation of the circumferential actomyosin belt in epithelial cells. This chain is Rho guanine nucleotide exchange factor 18 (ARHGEF18), found in Homo sapiens (Human).